Reading from the N-terminus, the 804-residue chain is Endoplasmin (804 aa).

Residues M1–A21 form the signal peptide. The short motif at S42–T44 is the SRT pseudosubstrate motif element. N-linked (GlcNAc...) asparagine glycosylation occurs at N62. Residue S64 is modified to Phosphoserine. N107 carries N-linked (GlcNAc...) asparagine glycosylation. N107, D149, and N162 together coordinate ATP. Residue K168 is modified to N6-(2-hydroxyisobutyryl)lysine. Position 172 is a phosphoserine (S172). F199 contacts ATP. The N-linked (GlcNAc...) asparagine glycan is linked to N217. The segment at T288–T323 is disordered. Positions V289–E317 are enriched in acidic residues. 2 positions are modified to phosphoserine: S306 and S403. Residue K404 is modified to N6-succinyllysine. Residue N445 is glycosylated (N-linked (GlcNAc...) asparagine). S447 carries the post-translational modification Phosphoserine. Position 479 is an N6-acetyllysine (K479). Residues N481 and N502 are each glycosylated (N-linked (GlcNAc...) asparagine). At K633 the chain carries N6-succinyllysine. Positions D750 to L804 are disordered. The segment covering D757–Q791 has biased composition (acidic residues). At T786 the chain carries Phosphothreonine. Over residues E792–L804 the composition is skewed to basic and acidic residues. Positions K801–L804 match the Prevents secretion from ER motif.

This sequence belongs to the heat shock protein 90 family. In terms of assembly, homodimer; disulfide-linked. Component of an EIF2 complex at least composed of CELF1/CUGBP1, CALR, CALR3, EIF2S1, EIF2S2, HSP90B1 and HSPA5. Part of a large chaperone multiprotein complex comprising DNAJB11, HSP90B1, HSPA5, HYOU, PDIA2, PDIA4, PDIA6, PPIB, SDF2L1, UGGT1 and very small amounts of ERP29, but not, or at very low levels, CALR nor CANX. Interacts with AIMP1; regulates its retention in the endoplasmic reticulum. Hyperglycosylated form interacts with OS9; promoting its degradation by the endoplasmic reticulum associated degradation (ERAD). Interacts with CNPY3. This interaction is disrupted in the presence of ATP. Interacts with TLR4 and TLR9, but not with TLR3. Interacts with MZB1 in a calcium-dependent manner. Interacts with METTL23. Interacts with IL1B; the interaction facilitates cargo translocation into the ERGIC. Interacts with EIF2AK3. Post-translationally, phosphorylated by CK2. In terms of processing, N-glycosylated cotranslationally at Asn-217 by STT3A-containing OST-A complex: this glycosylation is constitutive. In response to various stress, 5 additional facultative sites (Asn-62, Asn-107, Asn-445, Asn-481 and Asn-502) can be glycosylated post-translationally by STT3B-containing OST-B complex, leading to a hyperglycosylated form that is degraded by the ER-associated degradation (ERAD) pathway. In normal conditions, the OST-A complex together with CCDC134 prevent glycosylation at facultative sites during protein folding, thereby preventing hyperglycosylation. Mechanistically, nascent HSP90B1 is tethered during translation to a specialized CCDC134-containing translocon that forms a microenvironment for its folding, in which STT3A associates with the SRT pseudosubstrate motif, and prevents access to facultative glycosylation sites until folding is completed, rendering its facultative sites inaccessible to the OST-B complex.

It localises to the endoplasmic reticulum lumen. The protein resides in the sarcoplasmic reticulum lumen. Its subcellular location is the melanosome. The catalysed reaction is ATP + H2O = ADP + phosphate + H(+). In terms of biological role, ATP-dependent chaperone involved in the processing of proteins in the endoplasmic reticulum, regulating their transport. Together with MESD, acts as a modulator of the Wnt pathway by promoting the folding of LRP6, a coreceptor of the canonical Wnt pathway. When associated with CNPY3, required for proper folding of Toll-like receptors. Promotes folding and trafficking of TLR4 to the cell surface. May participate in the unfolding of cytosolic leaderless cargos (lacking the secretion signal sequence) such as the interleukin 1/IL-1 to facilitate their translocation into the ERGIC (endoplasmic reticulum-Golgi intermediate compartment) and secretion; the translocation process is mediated by the cargo receptor TMED10. The chain is Endoplasmin (HSP90B1) from Macaca fascicularis (Crab-eating macaque).